We begin with the raw amino-acid sequence, 182 residues long: Ribosome maturation factor RimM (182 aa).

One can recognise a PRC barrel domain in the interval 103-182; it reads EDEFYWRELF…RIEVDWDPGF (80 aa).

It belongs to the RimM family. As to quaternary structure, binds ribosomal protein uS19.

It is found in the cytoplasm. Functionally, an accessory protein needed during the final step in the assembly of 30S ribosomal subunit, possibly for assembly of the head region. Essential for efficient processing of 16S rRNA. May be needed both before and after RbfA during the maturation of 16S rRNA. It has affinity for free ribosomal 30S subunits but not for 70S ribosomes. In Vibrio campbellii (strain ATCC BAA-1116), this protein is Ribosome maturation factor RimM.